A 244-amino-acid polypeptide reads, in one-letter code: 5-oxoprolinase subunit A (244 aa).

It belongs to the LamB/PxpA family. Forms a complex composed of PxpA, PxpB and PxpC.

It catalyses the reaction 5-oxo-L-proline + ATP + 2 H2O = L-glutamate + ADP + phosphate + H(+). Functionally, catalyzes the cleavage of 5-oxoproline to form L-glutamate coupled to the hydrolysis of ATP to ADP and inorganic phosphate. This chain is 5-oxoprolinase subunit A, found in Shigella dysenteriae serotype 1 (strain Sd197).